The sequence spans 348 residues: Holliday junction branch migration complex subunit RuvB (348 aa).

A large ATPase domain (RuvB-L) region spans residues 4-184 (ADRLIAASGR…FGIVQRLEFY (181 aa)). Residues Ile23, Arg24, Gly65, Lys68, Thr69, Thr70, 131 to 133 (EDF), Arg174, Tyr184, and Arg221 each bind ATP. Thr69 contacts Mg(2+). The small ATPAse domain (RuvB-S) stretch occupies residues 185–255 (SDKDLATIVS…VADMALNLLD (71 aa)). Residues 258 to 348 (ERGFDHSDRR…GGDFSEPGDE (91 aa)) form a head domain (RuvB-H) region. DNA is bound by residues Arg294, Arg313, and Arg318.

It belongs to the RuvB family. In terms of assembly, homohexamer. Forms an RuvA(8)-RuvB(12)-Holliday junction (HJ) complex. HJ DNA is sandwiched between 2 RuvA tetramers; dsDNA enters through RuvA and exits via RuvB. An RuvB hexamer assembles on each DNA strand where it exits the tetramer. Each RuvB hexamer is contacted by two RuvA subunits (via domain III) on 2 adjacent RuvB subunits; this complex drives branch migration. In the full resolvosome a probable DNA-RuvA(4)-RuvB(12)-RuvC(2) complex forms which resolves the HJ.

It localises to the cytoplasm. It carries out the reaction ATP + H2O = ADP + phosphate + H(+). In terms of biological role, the RuvA-RuvB-RuvC complex processes Holliday junction (HJ) DNA during genetic recombination and DNA repair, while the RuvA-RuvB complex plays an important role in the rescue of blocked DNA replication forks via replication fork reversal (RFR). RuvA specifically binds to HJ cruciform DNA, conferring on it an open structure. The RuvB hexamer acts as an ATP-dependent pump, pulling dsDNA into and through the RuvAB complex. RuvB forms 2 homohexamers on either side of HJ DNA bound by 1 or 2 RuvA tetramers; 4 subunits per hexamer contact DNA at a time. Coordinated motions by a converter formed by DNA-disengaged RuvB subunits stimulates ATP hydrolysis and nucleotide exchange. Immobilization of the converter enables RuvB to convert the ATP-contained energy into a lever motion, pulling 2 nucleotides of DNA out of the RuvA tetramer per ATP hydrolyzed, thus driving DNA branch migration. The RuvB motors rotate together with the DNA substrate, which together with the progressing nucleotide cycle form the mechanistic basis for DNA recombination by continuous HJ branch migration. Branch migration allows RuvC to scan DNA until it finds its consensus sequence, where it cleaves and resolves cruciform DNA. The chain is Holliday junction branch migration complex subunit RuvB from Pseudomonas putida (strain GB-1).